A 242-amino-acid polypeptide reads, in one-letter code: Segregation and condensation protein A (242 aa).

This sequence belongs to the ScpA family. In terms of assembly, component of a cohesin-like complex composed of ScpA, ScpB and the Smc homodimer, in which ScpA and ScpB bind to the head domain of Smc. The presence of the three proteins is required for the association of the complex with DNA.

The protein resides in the cytoplasm. In terms of biological role, participates in chromosomal partition during cell division. May act via the formation of a condensin-like complex containing Smc and ScpB that pull DNA away from mid-cell into both cell halves. In Streptococcus pneumoniae serotype 19F (strain G54), this protein is Segregation and condensation protein A.